The chain runs to 337 residues: Ferredoxin--NADP reductase (337 aa).

Residues D35, Q43, Y48, A88, F122, D289, and T330 each contribute to the FAD site.

It belongs to the ferredoxin--NADP reductase type 2 family. In terms of assembly, homodimer. FAD is required as a cofactor.

The enzyme catalyses 2 reduced [2Fe-2S]-[ferredoxin] + NADP(+) + H(+) = 2 oxidized [2Fe-2S]-[ferredoxin] + NADPH. In Ehrlichia ruminantium (strain Gardel), this protein is Ferredoxin--NADP reductase.